A 215-amino-acid chain; its full sequence is uncharacterized protein (215 aa).

Residues S114, D162, and H194 each act as charge relay system in the active site.

Belongs to the AB hydrolase superfamily. AB hydrolase 2 family.

This is an uncharacterized protein from Rickettsia felis (strain ATCC VR-1525 / URRWXCal2) (Rickettsia azadi).